The following is a 284-amino-acid chain: F-box protein PP2-B5 (284 aa).

Positions 32–80 (ASFDDLPDDCLAIISSFTSTPRDAFLAALVSKSFGLQFNSDSVWEKFLP) constitute an F-box domain.

The chain is F-box protein PP2-B5 (PP2B5) from Arabidopsis thaliana (Mouse-ear cress).